The sequence spans 173 residues: Cytochrome c-type biogenesis protein CcmE (173 aa).

Residues 1–7 (MTRKSRR) lie on the Cytoplasmic side of the membrane. Residues 8 to 28 (LILIAACGAVLALALGLILSA) traverse the membrane as a helical; Signal-anchor for type II membrane protein segment. The Periplasmic portion of the chain corresponds to 29-173 (MSGSIVFFRS…DATLGQRSER (145 aa)). The heme site is built by His-122 and Tyr-126. A disordered region spans residues 134–173 (ALKAQGRWQEGGGKDASKAAPKDAAKPETADATLGQRSER). The span at 145–162 (GGKDASKAAPKDAAKPET) shows a compositional bias: basic and acidic residues.

It belongs to the CcmE/CycJ family.

It localises to the cell inner membrane. In terms of biological role, heme chaperone required for the biogenesis of c-type cytochromes. Transiently binds heme delivered by CcmC and transfers the heme to apo-cytochromes in a process facilitated by CcmF and CcmH. The chain is Cytochrome c-type biogenesis protein CcmE from Methylorubrum extorquens (strain CM4 / NCIMB 13688) (Methylobacterium extorquens).